The chain runs to 347 residues: Microfibril-associated glycoprotein 3 (347 aa).

An N-terminal signal peptide occupies residues 1–22; it reads MKLHYCLCILLVVTFVPTALVL. At 23–139 the chain is on the extracellular side; sequence EDVTPLGTNQ…TLRVIFTSGD (117 aa). N-linked (GlcNAc...) asparagine glycosylation is found at Asn-31, Asn-36, Asn-63, and Asn-103. One can recognise an Ig-like C2-type domain in the interval 47–130; sequence AGSYSGDDVI…SPTRASYSVT (84 aa). Cys-68 and Cys-117 are disulfide-bonded. Residues 140 to 160 form a helical membrane-spanning segment; it reads MSVYYMVVCLIAFTITLILNV. The Cytoplasmic portion of the chain corresponds to 161-347; that stretch reads TRLCLMSTHL…SAEGSTHHRE (187 aa). A disordered region spans residues 280–347; the sequence is NPELGRSNSP…SAEGSTHHRE (68 aa). Over residues 311-331 the composition is skewed to polar residues; sequence VHLQSETKSIGTDSQDSSHFS.

In terms of processing, glycosylated.

Its subcellular location is the cell membrane. In terms of biological role, component of the elastin-associated microfibrils. The polypeptide is Microfibril-associated glycoprotein 3 (Mfap3) (Rattus norvegicus (Rat)).